A 251-amino-acid polypeptide reads, in one-letter code: Small ribosomal subunit protein uS3 (251 aa).

Positions 39-112 (IRKYINEVYA…NIILNVVEVR (74 aa)) constitute a KH type-2 domain. A disordered region spans residues 222–251 (EEKKPAKKFNKKPVAAKPANKEEKSSKEVK). Positions 240–251 (ANKEEKSSKEVK) are enriched in basic and acidic residues.

It belongs to the universal ribosomal protein uS3 family. Part of the 30S ribosomal subunit. Forms a tight complex with proteins S10 and S14.

Functionally, binds the lower part of the 30S subunit head. Binds mRNA in the 70S ribosome, positioning it for translation. The sequence is that of Small ribosomal subunit protein uS3 from Anaeroplasma abactoclasticum.